The primary structure comprises 621 residues: 1-deoxy-D-xylulose-5-phosphate synthase (621 aa).

Thiamine diphosphate is bound by residues H80 and 121–123 (GHS). A Mg(2+)-binding site is contributed by D152. Residues 153 to 154 (GA), N181, Y288, and E370 contribute to the thiamine diphosphate site. N181 serves as a coordination point for Mg(2+).

The protein belongs to the transketolase family. DXPS subfamily. In terms of assembly, homodimer. Mg(2+) is required as a cofactor. It depends on thiamine diphosphate as a cofactor.

It catalyses the reaction D-glyceraldehyde 3-phosphate + pyruvate + H(+) = 1-deoxy-D-xylulose 5-phosphate + CO2. Its pathway is metabolic intermediate biosynthesis; 1-deoxy-D-xylulose 5-phosphate biosynthesis; 1-deoxy-D-xylulose 5-phosphate from D-glyceraldehyde 3-phosphate and pyruvate: step 1/1. Catalyzes the acyloin condensation reaction between C atoms 2 and 3 of pyruvate and glyceraldehyde 3-phosphate to yield 1-deoxy-D-xylulose-5-phosphate (DXP). This is 1-deoxy-D-xylulose-5-phosphate synthase from Shewanella woodyi (strain ATCC 51908 / MS32).